Consider the following 290-residue polypeptide: Lipoyl synthase (290 aa).

Positions 36, 41, 47, 62, 66, 69, and 275 each coordinate [4Fe-4S] cluster. A Radical SAM core domain is found at 48–264 (FSKKTATFMI…KEEALKIGFS (217 aa)).

This sequence belongs to the radical SAM superfamily. Lipoyl synthase family. [4Fe-4S] cluster is required as a cofactor.

Its subcellular location is the cytoplasm. The catalysed reaction is [[Fe-S] cluster scaffold protein carrying a second [4Fe-4S](2+) cluster] + N(6)-octanoyl-L-lysyl-[protein] + 2 oxidized [2Fe-2S]-[ferredoxin] + 2 S-adenosyl-L-methionine + 4 H(+) = [[Fe-S] cluster scaffold protein] + N(6)-[(R)-dihydrolipoyl]-L-lysyl-[protein] + 4 Fe(3+) + 2 hydrogen sulfide + 2 5'-deoxyadenosine + 2 L-methionine + 2 reduced [2Fe-2S]-[ferredoxin]. Its pathway is protein modification; protein lipoylation via endogenous pathway; protein N(6)-(lipoyl)lysine from octanoyl-[acyl-carrier-protein]: step 2/2. Catalyzes the radical-mediated insertion of two sulfur atoms into the C-6 and C-8 positions of the octanoyl moiety bound to the lipoyl domains of lipoate-dependent enzymes, thereby converting the octanoylated domains into lipoylated derivatives. The polypeptide is Lipoyl synthase (Alkaliphilus metalliredigens (strain QYMF)).